The following is a 215-amino-acid chain: UPF0502 protein YceH (215 aa).

Position 80 is an N6-acetyllysine (lysine 80).

It belongs to the UPF0502 family.

This chain is UPF0502 protein YceH, found in Escherichia coli O7:K1 (strain IAI39 / ExPEC).